The sequence spans 98 residues: Integration host factor subunit beta (98 aa).

It belongs to the bacterial histone-like protein family. As to quaternary structure, heterodimer of an alpha and a beta chain.

This protein is one of the two subunits of integration host factor, a specific DNA-binding protein that functions in genetic recombination as well as in transcriptional and translational control. The sequence is that of Integration host factor subunit beta from Pseudomonas entomophila (strain L48).